The chain runs to 2443 residues: Spatacsin (2443 aa).

Serine 1955 is modified (phosphoserine).

As to quaternary structure, interacts with AP5Z1, AP5B1, AP5S1 and ZFYVE26. As to expression, expressed in all structures of brain, with a high expression in cerebellum. Expressed in cortical projection neurons.

It localises to the cytoplasm. The protein resides in the cytosol. Its subcellular location is the nucleus. It is found in the cell projection. The protein localises to the axon. It localises to the dendrite. May play a role in neurite plasticity by maintaining cytoskeleton stability and regulating synaptic vesicle transport. This is Spatacsin (SPG11) from Homo sapiens (Human).